The primary structure comprises 295 residues: Acetylglutamate kinase (295 aa).

Residues 66–67 (GG), Arg-88, and Asn-193 each bind substrate.

Belongs to the acetylglutamate kinase family. ArgB subfamily.

The protein resides in the cytoplasm. The enzyme catalyses N-acetyl-L-glutamate + ATP = N-acetyl-L-glutamyl 5-phosphate + ADP. It functions in the pathway amino-acid biosynthesis; L-arginine biosynthesis; N(2)-acetyl-L-ornithine from L-glutamate: step 2/4. Functionally, catalyzes the ATP-dependent phosphorylation of N-acetyl-L-glutamate. This is Acetylglutamate kinase from Gluconobacter oxydans (strain 621H) (Gluconobacter suboxydans).